The sequence spans 121 residues: Acidic phospholipase A2 PLA-2 (121 aa).

7 disulfides stabilise this stretch: C26–C115, C28–C44, C43–C95, C49–C121, C50–C88, C57–C81, and C75–C86. The Ca(2+) site is built by Y27, G29, and G31. The active site involves H47. D48 provides a ligand contact to Ca(2+). D89 is a catalytic residue.

It belongs to the phospholipase A2 family. Group II subfamily. D49 sub-subfamily. Ca(2+) serves as cofactor. Expressed by the venom gland.

It is found in the secreted. It carries out the reaction a 1,2-diacyl-sn-glycero-3-phosphocholine + H2O = a 1-acyl-sn-glycero-3-phosphocholine + a fatty acid + H(+). Functionally, PLA2 catalyzes the calcium-dependent hydrolysis of the 2-acyl groups in 3-sn-phosphoglycerides. The chain is Acidic phospholipase A2 PLA-2 from Eristicophis macmahoni (Leaf-nosed viper).